The following is a 503-amino-acid chain: ATP synthase subunit alpha (503 aa).

169-176 (GDRGTGKT) is a binding site for ATP.

The protein belongs to the ATPase alpha/beta chains family. F-type ATPases have 2 components, CF(1) - the catalytic core - and CF(0) - the membrane proton channel. CF(1) has five subunits: alpha(3), beta(3), gamma(1), delta(1), epsilon(1). CF(0) has three main subunits: a(1), b(2) and c(9-12). The alpha and beta chains form an alternating ring which encloses part of the gamma chain. CF(1) is attached to CF(0) by a central stalk formed by the gamma and epsilon chains, while a peripheral stalk is formed by the delta and b chains.

It localises to the cell inner membrane. The enzyme catalyses ATP + H2O + 4 H(+)(in) = ADP + phosphate + 5 H(+)(out). Its function is as follows. Produces ATP from ADP in the presence of a proton gradient across the membrane. The alpha chain is a regulatory subunit. The chain is ATP synthase subunit alpha from Leptospira borgpetersenii serovar Hardjo-bovis (strain L550).